We begin with the raw amino-acid sequence, 500 residues long: Cytochrome P450 71D13 (500 aa).

Residues 3–23 (LQISSAIIILVVTYTISLLII) traverse the membrane as a helical; Signal-anchor for type II membrane protein segment. C439 serves as a coordination point for heme.

The protein belongs to the cytochrome P450 family. Heme is required as a cofactor.

The protein localises to the endoplasmic reticulum membrane. It carries out the reaction (4S)-limonene + reduced [NADPH--hemoprotein reductase] + O2 = (1S,6R)-isopiperitenol + oxidized [NADPH--hemoprotein reductase] + H2O + H(+). Hydroxylates (-)-(4S)-limonene to (-)-trans-isopiperitenol, a precursor of (-)-menthol, responsible for the cooling sensation of peppermint. In Mentha piperita (Peppermint), this protein is Cytochrome P450 71D13 (CYP71D13).